The chain runs to 260 residues: Adenosylcobinamide-GDP ribazoletransferase (260 aa).

A run of 7 helical transmembrane segments spans residues 42–62, 64–84, 117–137, 144–164, 192–212, 214–234, and 240–260; these read PLAG…ANAI, LPPL…TGAL, FAAL…MAII, YALL…LAFW, GLGL…VALI, ALVL…AKIG, and TLGA…VMAL.

Belongs to the CobS family. Requires Mg(2+) as cofactor.

It is found in the cell inner membrane. The catalysed reaction is alpha-ribazole + adenosylcob(III)inamide-GDP = adenosylcob(III)alamin + GMP + H(+). The enzyme catalyses alpha-ribazole 5'-phosphate + adenosylcob(III)inamide-GDP = adenosylcob(III)alamin 5'-phosphate + GMP + H(+). Its pathway is cofactor biosynthesis; adenosylcobalamin biosynthesis; adenosylcobalamin from cob(II)yrinate a,c-diamide: step 7/7. Its function is as follows. Joins adenosylcobinamide-GDP and alpha-ribazole to generate adenosylcobalamin (Ado-cobalamin). Also synthesizes adenosylcobalamin 5'-phosphate from adenosylcobinamide-GDP and alpha-ribazole 5'-phosphate. In Brucella ovis (strain ATCC 25840 / 63/290 / NCTC 10512), this protein is Adenosylcobinamide-GDP ribazoletransferase.